Here is a 396-residue protein sequence, read N- to C-terminus: Phosphoglycerate kinase (396 aa).

Substrate is bound by residues 21-23 (DFN), Arg36, 59-62 (HLGR), Arg119, and Arg156. Residues Lys207, Glu325, and 352–355 (GGDS) contribute to the ATP site.

This sequence belongs to the phosphoglycerate kinase family. As to quaternary structure, monomer.

The protein localises to the cytoplasm. The catalysed reaction is (2R)-3-phosphoglycerate + ATP = (2R)-3-phospho-glyceroyl phosphate + ADP. Its pathway is carbohydrate degradation; glycolysis; pyruvate from D-glyceraldehyde 3-phosphate: step 2/5. This is Phosphoglycerate kinase from Lacticaseibacillus casei (strain BL23) (Lactobacillus casei).